The chain runs to 196 residues: MRVKICGITNLEDALVAIEAGADALGFVFYEKSPRYIHPQEAKIISKKLPPFVERVGLFVHEEPVKIDEICSYCNMSLAQIHFDVEESFFEKLQTKALPVVRAKCAEDILQFSDRYRLVDAYVPEFGGAGRRVALEWFENIDCSKIVLAGGLSPKNVSEVKRYGFYGVDVSSGVEARKGKKDPQKVREFIQKAKFE.

This sequence belongs to the TrpF family.

It catalyses the reaction N-(5-phospho-beta-D-ribosyl)anthranilate = 1-(2-carboxyphenylamino)-1-deoxy-D-ribulose 5-phosphate. It functions in the pathway amino-acid biosynthesis; L-tryptophan biosynthesis; L-tryptophan from chorismate: step 3/5. The sequence is that of N-(5'-phosphoribosyl)anthranilate isomerase from Nitratiruptor sp. (strain SB155-2).